The sequence spans 384 residues: Glucans biosynthesis protein C (384 aa).

A run of 10 helical transmembrane segments spans residues 17 to 37 (AWLMLLGIPFHISLIYSTHSW), 54 to 74 (FIHAFRMQVFFVISGYFSYML), 91 to 111 (VGIPMLTAIPLLTLPQFILLQ), 140 to 160 (LWFLLVLVILTTVSIGIFTWF), 173 to 193 (AISLARLSLIFFLLGMAYAAI), 212 to 232 (FIVMQTLFYVPFFILGALAFI), 240 to 260 (FTTPSRGCTLGAAVAFIAYLL), 274 to 294 (TESVITMVMGLWMVNVVFSLG), 311 to 331 (ASLFIYLVHHPLTLFFGAYIT), and 338 to 358 (LIGFLCGLIFVMGIALILYEI).

It belongs to the acyltransferase 3 family. OpgC subfamily.

Its subcellular location is the cell membrane. The protein operates within glycan metabolism; osmoregulated periplasmic glucan (OPG) biosynthesis. Necessary for the succinyl substitution of periplasmic glucans. Could catalyze the transfer of succinyl residues from the cytoplasmic side of the membrane to the nascent glucan backbones on the periplasmic side of the membrane. The protein is Glucans biosynthesis protein C of Salmonella agona (strain SL483).